The chain runs to 888 residues: Mitogen-activated protein kinase kinase kinase 12 (888 aa).

Residues 26–42 (MRKLDPDTSDCTPEKDL) show a composition bias toward basic and acidic residues. The segment at 26–104 (MRKLDPDTSD…TGSPESRASR (79 aa)) is disordered. A phosphothreonine mark is found at Thr-37 and Thr-43. A compositionally biased stretch (pro residues) spans 64–75 (SPSPGGEPPPEP). Positions 158–399 (ILDLQWVGSG…FRQILLHLDI (242 aa)) constitute a Protein kinase domain. ATP-binding positions include 164–172 (VGSGAQGAV) and Lys-185. Asp-269 serves as the catalytic Proton acceptor. Leucine-zipper regions lie at residues 423 to 444 (VKLH…EEEL) and 476 to 497 (LNAL…EQAL). The segment at 557-620 (GVGLPGCPKA…GGLGVGPTAW (64 aa)) is disordered. The segment covering 572–584 (RSRRGKTRHRKAS) has biased composition (basic residues). A compositionally biased stretch (gly residues) spans 605–615 (GGLGSPGGLGV). Ser-640 is modified (phosphoserine). Disordered regions lie at residues 654–731 (RGRG…YQHL) and 743–888 (TRSQ…SLPP). Gly residues predominate over residues 704 to 725 (PGEGVGLLGTGREGTTGRGGSR). Positions 752-763 (SEEEEGEVDSEV) are enriched in acidic residues. Polar residues-rich tracts occupy residues 776–789 (NMRQ…SENP) and 798–812 (SEPS…GSTN). Residues 813–823 (TDERPDERSDD) show a composition bias toward basic and acidic residues.

This sequence belongs to the protein kinase superfamily. STE Ser/Thr protein kinase family. MAP kinase kinase kinase subfamily. As to quaternary structure, homodimer. Interacts with MBIP. Mg(2+) serves as cofactor. Autophosphorylated on Ser/Thr. Phosphorylated in cytosol under basal conditions and dephosphorylated when membrane-associated. In terms of processing, the activity of MAP3K12 can be regulated through its proteasomal degradation. APOE, through a receptor-mediated mechanism, activates MAP3K12 by preventing its proteasomal degradation.

It localises to the cytoplasm. It is found in the cell membrane. The enzyme catalyses L-seryl-[protein] + ATP = O-phospho-L-seryl-[protein] + ADP + H(+). It carries out the reaction L-threonyl-[protein] + ATP = O-phospho-L-threonyl-[protein] + ADP + H(+). Part of a non-canonical MAPK signaling pathway. Activated by APOE, enhances the AP-1-mediated transcription of APP, via a MAP kinase signal transduction pathway composed of MAP2K7 and MAPK1/ERK2 and MAPK3/ERK1. May be an activator of the JNK/SAPK pathway. The sequence is that of Mitogen-activated protein kinase kinase kinase 12 (Map3k12) from Rattus norvegicus (Rat).